We begin with the raw amino-acid sequence, 427 residues long: Protein king tubby 1 (427 aa).

The interval 48–174 (SPSNPDQIIS…ASGHNDAEGD (127 aa)) is disordered. Residues 57–86 (SSSGSPTTVTATGTGTTTTTGSVTTTPTSP) are compositionally biased toward low complexity.

Belongs to the TUB family.

The protein localises to the cytoplasm. It is found in the nucleus. The chain is Protein king tubby 1 (king-tubby1) from Culex quinquefasciatus (Southern house mosquito).